A 331-amino-acid chain; its full sequence is Lipoyl synthase (331 aa).

The interval 1-20 (MTTETNPAVTPAYNPSEKQK) is disordered. [4Fe-4S] cluster-binding residues include cysteine 71, cysteine 76, cysteine 82, cysteine 97, cysteine 101, cysteine 104, and serine 311. Positions 82–300 (CFGKGTATFM…EEEAYKMGFA (219 aa)) constitute a Radical SAM core domain.

Belongs to the radical SAM superfamily. Lipoyl synthase family. The cofactor is [4Fe-4S] cluster.

It is found in the cytoplasm. It catalyses the reaction [[Fe-S] cluster scaffold protein carrying a second [4Fe-4S](2+) cluster] + N(6)-octanoyl-L-lysyl-[protein] + 2 oxidized [2Fe-2S]-[ferredoxin] + 2 S-adenosyl-L-methionine + 4 H(+) = [[Fe-S] cluster scaffold protein] + N(6)-[(R)-dihydrolipoyl]-L-lysyl-[protein] + 4 Fe(3+) + 2 hydrogen sulfide + 2 5'-deoxyadenosine + 2 L-methionine + 2 reduced [2Fe-2S]-[ferredoxin]. Its pathway is protein modification; protein lipoylation via endogenous pathway; protein N(6)-(lipoyl)lysine from octanoyl-[acyl-carrier-protein]: step 2/2. In terms of biological role, catalyzes the radical-mediated insertion of two sulfur atoms into the C-6 and C-8 positions of the octanoyl moiety bound to the lipoyl domains of lipoate-dependent enzymes, thereby converting the octanoylated domains into lipoylated derivatives. The chain is Lipoyl synthase from Janthinobacterium sp. (strain Marseille) (Minibacterium massiliensis).